Consider the following 79-residue polypeptide: Delta-hormotoxin-Cpt1b (79 aa).

Positions 1-20 (MKTQVLALFVLCVLFCLAES) are cleaved as a signal peptide. The propeptide occupies 21–31 (RTTLNKRNDIE). 3 cysteine pairs are disulfide-bonded: cysteine 36–cysteine 75, cysteine 38–cysteine 66, and cysteine 56–cysteine 76.

This sequence belongs to the sea anemone sodium channel inhibitory toxin family.

The protein localises to the secreted. Its subcellular location is the nematocyst. In terms of biological role, in neuromuscular preparation of crustaceans, the toxin increased neurotransmitter release, causing repetitive firing of the axons. May affect sodium channels (Nav). This chain is Delta-hormotoxin-Cpt1b, found in Calliactis parasitica (Sea anemone).